The following is a 120-amino-acid chain: Response regulator receiver protein CpdR (120 aa).

Residues 3-117 form the Response regulatory domain; that stretch reads RILLAEDDND…DLVNEIEKML (115 aa). A 4-aspartylphosphate modification is found at Asp52.

Is phosphorylated by ChpT-P on Asp-52.

The protein localises to the cytoplasm. In terms of biological role, component of a regulatory phosphorelay system that controls B.abortus cell growth, division, and intracellular survival inside mammalian host cells. This signaling pathway is composed of CckA, ChpT, CtrA and CpdR. CpdR is a response regulator substrate of ChpT. Unphosphorylated CpdR controls steady-state levels of CtrA in the B.abortus cell, likely via CtrA destabilization and activation of its proteolysis. This Brucella abortus (strain 2308) protein is Response regulator receiver protein CpdR.